A 117-amino-acid chain; its full sequence is Chondroitin proteoglycan 7 (117 aa).

A signal peptide spans 1-19; sequence MQTITLLALLACIAVPIFA. Residues 31-97 are disordered; the sequence is VEASGEGSGE…SGENLSNGIV (67 aa). Composition is skewed to low complexity over residues 32-41 and 48-57; these read EASGEGSGES and ESSGEGSGES. Residues S66, S70, S74, S84, and S88 are each glycosylated (O-linked (Xyl...) (chondroitin sulfate) serine). Positions 75–95 are enriched in low complexity; it reads GASDAVLESSGEGSGENLSNG. N-linked (GlcNAc...) asparagine glycosylation is present at N91.

This is Chondroitin proteoglycan 7 (cpg-7) from Caenorhabditis briggsae.